A 399-amino-acid polypeptide reads, in one-letter code: Phosphoglycerate kinase (399 aa).

Residues 22–24 (DFN), Arg37, 60–63 (HFGR), Arg118, and Arg151 contribute to the substrate site. ATP is bound by residues Lys201, Glu322, and 352–355 (GGDS).

It belongs to the phosphoglycerate kinase family. As to quaternary structure, monomer.

It localises to the cytoplasm. The enzyme catalyses (2R)-3-phosphoglycerate + ATP = (2R)-3-phospho-glyceroyl phosphate + ADP. It participates in carbohydrate degradation; glycolysis; pyruvate from D-glyceraldehyde 3-phosphate: step 2/5. In Wolbachia sp. subsp. Brugia malayi (strain TRS), this protein is Phosphoglycerate kinase.